A 108-amino-acid polypeptide reads, in one-letter code: UPF0060 membrane protein YnfA (108 aa).

At 1–5 (MLKTT) the chain is on the periplasmic side. The chain crosses the membrane as a helical span at residues 6–26 (LLFFVTALCEIIGCFLPWLWI). Residues 27–30 (KRGA) lie on the Cytoplasmic side of the membrane. The chain crosses the membrane as a helical span at residues 31–51 (SVWWLLPAAASLALFVWLLTL). Residues 52–60 (HPAASGRVY) lie on the Periplasmic side of the membrane. The helical transmembrane segment at 61–81 (AAYGGVYVCTALLWLRVVDGV) threads the bilayer. Over 82-84 (RLT) the chain is Cytoplasmic. A helical membrane pass occupies residues 85 to 105 (VYDWCGALIALCGMLIIVVGW). The Periplasmic segment spans residues 106–108 (GRT).

The protein belongs to the UPF0060 family.

Its subcellular location is the cell inner membrane. This Salmonella paratyphi A (strain ATCC 9150 / SARB42) protein is UPF0060 membrane protein YnfA.